A 227-amino-acid chain; its full sequence is MTSITIALSKGRIFDDTAPLLKAAGIIPLDDPETSRKLILATNRDDVRLIIVRASDVPTYVQYGAADMGIAGKDVLLEHGGAGLYQPLDLNIARCRMMVAVRSDFDYESAVRRGARVRVATKYLQTAREHFAEKGMHVDLIKLYGSMELAPLVGLADAIVDLVSSGNTLKANNLKAVEEIMPISSRLIINQAALKLKRRAIQPMLEAFSAAITPLTPLSPYPLGATP.

This sequence belongs to the ATP phosphoribosyltransferase family. Short subfamily. Heteromultimer composed of HisG and HisZ subunits.

It localises to the cytoplasm. The enzyme catalyses 1-(5-phospho-beta-D-ribosyl)-ATP + diphosphate = 5-phospho-alpha-D-ribose 1-diphosphate + ATP. Its pathway is amino-acid biosynthesis; L-histidine biosynthesis; L-histidine from 5-phospho-alpha-D-ribose 1-diphosphate: step 1/9. In terms of biological role, catalyzes the condensation of ATP and 5-phosphoribose 1-diphosphate to form N'-(5'-phosphoribosyl)-ATP (PR-ATP). Has a crucial role in the pathway because the rate of histidine biosynthesis seems to be controlled primarily by regulation of HisG enzymatic activity. The chain is ATP phosphoribosyltransferase from Nitrosospira multiformis (strain ATCC 25196 / NCIMB 11849 / C 71).